An 89-amino-acid chain; its full sequence is Cell division topological specificity factor (89 aa).

It belongs to the MinE family.

Prevents the cell division inhibition by proteins MinC and MinD at internal division sites while permitting inhibition at polar sites. This ensures cell division at the proper site by restricting the formation of a division septum at the midpoint of the long axis of the cell. The sequence is that of Cell division topological specificity factor from Heliobacterium modesticaldum (strain ATCC 51547 / Ice1).